The sequence spans 1124 residues: EGF and laminin G domain-containing protein (1124 aa).

At arginine 1–threonine 1055 the chain is on the extracellular side. Laminin G-like domains lie at serine 8–cysteine 203 and proline 210–cysteine 369. 9 cysteine pairs are disulfide-bonded: cysteine 167–cysteine 203, cysteine 342–cysteine 369, cysteine 375–cysteine 386, cysteine 380–cysteine 395, cysteine 397–cysteine 412, cysteine 761–cysteine 788, cysteine 792–cysteine 803, cysteine 797–cysteine 812, and cysteine 814–cysteine 824. The region spanning isoleucine 371–glutamine 413 is the EGF-like 1 domain. In terms of domain architecture, Laminin G-like 3 spans asparagine 621 to cysteine 788. The region spanning glycine 789–histidine 825 is the EGF-like 2 domain. The interval arginine 1011–leucine 1047 is disordered. Residues aspartate 1034–lysine 1046 show a composition bias toward polar residues. A helical membrane pass occupies residues alanine 1056–isoleucine 1076. The Cytoplasmic portion of the chain corresponds to tyrosine 1077 to isoleucine 1124. The disordered stretch occupies residues histidine 1090–isoleucine 1124. Over residues leucine 1111–isoleucine 1124 the composition is skewed to basic and acidic residues.

Component of the acid-insoluble organic matrix of the aragonitic skeleton (at protein level).

It is found in the membrane. The chain is EGF and laminin G domain-containing protein from Acropora millepora (Staghorn coral).